Here is a 137-residue protein sequence, read N- to C-terminus: Putative transcriptional regulatory protein MJ0173 (137 aa).

The protein belongs to the Tfx family.

Its function is as follows. Putative transcriptional regulator. The polypeptide is Putative transcriptional regulatory protein MJ0173 (Methanocaldococcus jannaschii (strain ATCC 43067 / DSM 2661 / JAL-1 / JCM 10045 / NBRC 100440) (Methanococcus jannaschii)).